A 397-amino-acid chain; its full sequence is DNA replication and repair protein RecF (397 aa).

Position 30-37 (30-37) interacts with ATP; the sequence is GPNGQGKT.

It belongs to the RecF family.

It localises to the cytoplasm. Functionally, the RecF protein is involved in DNA metabolism; it is required for DNA replication and normal SOS inducibility. RecF binds preferentially to single-stranded, linear DNA. It also seems to bind ATP. The sequence is that of DNA replication and repair protein RecF from Beutenbergia cavernae (strain ATCC BAA-8 / DSM 12333 / CCUG 43141 / JCM 11478 / NBRC 16432 / NCIMB 13614 / HKI 0122).